We begin with the raw amino-acid sequence, 454 residues long: Epoxide hydrolase 1 (454 aa).

A helical transmembrane segment spans residues 1–21 (MWLEILLASVLGFVIYWFVSK). Residues 22–454 (DKEETLLLGD…RKFMGLLEQQ (433 aa)) are Cytoplasmic-facing. Asp226 functions as the Nucleophile in the catalytic mechanism. Arg294 is modified (dimethylated arginine). The active-site Proton donor is Tyr373. The active-site Proton acceptor is the His430.

It belongs to the peptidase S33 family.

The protein resides in the microsome membrane. It is found in the endoplasmic reticulum membrane. The catalysed reaction is cis-stilbene oxide + H2O = (1R,2R)-hydrobenzoin. The enzyme catalyses 1-(4-methoxyphenyl)-N-methyl-N-[(3-methyloxetan-3-yl)methyl]methanamine + H2O = 2-{[(4-methoxybenzyl)(methyl)amino]methyl}-2-methylpropane-1,3-diol. It carries out the reaction 8,9-epoxy-(5Z,11Z,14Z)-eicosatrienoate + H2O = 8,9-dihydroxy-(5Z,11Z,14Z)-eicosatrienoate. It catalyses the reaction 11,12-epoxy-(5Z,8Z,14Z)-eicosatrienoate + H2O = 11,12-dihydroxy-(5Z,8Z,14Z)-eicosatrienoate. The catalysed reaction is 2-(5Z,8Z,11Z,14Z-eicosatetraenoyl)-glycerol + H2O = glycerol + (5Z,8Z,11Z,14Z)-eicosatetraenoate + H(+). Inhibited by 10-hydroxystearamide and methoxy-arachidonyl fluorophosphate. Functionally, biotransformation enzyme that catalyzes the hydrolysis of arene and aliphatic epoxides to less reactive and more water soluble dihydrodiols by the trans addition of water. May play a role in the metabolism of endogenous lipids such as epoxide-containing fatty acids. Metabolizes the abundant endocannabinoid 2-arachidonoylglycerol (2-AG) to free arachidonic acid (AA) and glycerol. Binds 20(S)-hydroxycholesterol (20(S)-OHC). This Sus scrofa (Pig) protein is Epoxide hydrolase 1 (EPHX1).